The sequence spans 117 residues: Putative membrane protein insertion efficiency factor (117 aa).

The disordered stretch occupies residues 87–117 (RKGGPSAAEPAIEGHIPSSPAAETPSHVQGA).

The protein belongs to the UPF0161 family.

The protein localises to the cell membrane. Could be involved in insertion of integral membrane proteins into the membrane. This is Putative membrane protein insertion efficiency factor from Streptomyces avermitilis (strain ATCC 31267 / DSM 46492 / JCM 5070 / NBRC 14893 / NCIMB 12804 / NRRL 8165 / MA-4680).